Reading from the N-terminus, the 463-residue chain is Cysteine--tRNA ligase (463 aa).

Residue cysteine 30 participates in Zn(2+) binding. Positions 32–42 (MTVYDYCHVGH) match the 'HIGH' region motif. Cysteine 214, histidine 239, and glutamate 243 together coordinate Zn(2+). The 'KMSKS' region motif lies at 271–275 (KMSKS). Lysine 274 contributes to the ATP binding site.

Belongs to the class-I aminoacyl-tRNA synthetase family. As to quaternary structure, monomer. Requires Zn(2+) as cofactor.

The protein resides in the cytoplasm. The catalysed reaction is tRNA(Cys) + L-cysteine + ATP = L-cysteinyl-tRNA(Cys) + AMP + diphosphate. In Ralstonia pickettii (strain 12J), this protein is Cysteine--tRNA ligase.